The primary structure comprises 170 residues: Ribosome maturation factor RimM (170 aa).

The PRC barrel domain maps to 97–170 (KPDEYYWVDL…LVVVDWDPEF (74 aa)).

The protein belongs to the RimM family. As to quaternary structure, binds ribosomal protein uS19.

It is found in the cytoplasm. In terms of biological role, an accessory protein needed during the final step in the assembly of 30S ribosomal subunit, possibly for assembly of the head region. Essential for efficient processing of 16S rRNA. May be needed both before and after RbfA during the maturation of 16S rRNA. It has affinity for free ribosomal 30S subunits but not for 70S ribosomes. The protein is Ribosome maturation factor RimM of Stenotrophomonas maltophilia (strain K279a).